The primary structure comprises 225 residues: NAD(P)H-quinone oxidoreductase subunit K, chloroplastic (225 aa).

Residues Cys-43, Cys-44, Cys-108, and Cys-139 each contribute to the [4Fe-4S] cluster site.

This sequence belongs to the complex I 20 kDa subunit family. NDH is composed of at least 16 different subunits, 5 of which are encoded in the nucleus. Requires [4Fe-4S] cluster as cofactor.

Its subcellular location is the plastid. The protein resides in the chloroplast thylakoid membrane. The catalysed reaction is a plastoquinone + NADH + (n+1) H(+)(in) = a plastoquinol + NAD(+) + n H(+)(out). The enzyme catalyses a plastoquinone + NADPH + (n+1) H(+)(in) = a plastoquinol + NADP(+) + n H(+)(out). Functionally, NDH shuttles electrons from NAD(P)H:plastoquinone, via FMN and iron-sulfur (Fe-S) centers, to quinones in the photosynthetic chain and possibly in a chloroplast respiratory chain. The immediate electron acceptor for the enzyme in this species is believed to be plastoquinone. Couples the redox reaction to proton translocation, and thus conserves the redox energy in a proton gradient. This Nicotiana tabacum (Common tobacco) protein is NAD(P)H-quinone oxidoreductase subunit K, chloroplastic.